The primary structure comprises 349 residues: 11-beta-hydroxysteroid dehydrogenase 1A (349 aa).

The helical; Signal-anchor for type II membrane protein transmembrane segment at 10-30 (LTAPFFTFFGLCFFLPPFYFF) threads the bilayer. Residues 54–80 (GASS…TARR) and Asp105 contribute to the NADP(+) site. Residue Ser184 coordinates substrate. The active-site Proton acceptor is the Tyr197. NADP(+) contacts are provided by residues 197-201 (YNASK) and Lys201.

This sequence belongs to the short-chain dehydrogenases/reductases (SDR) family. In terms of tissue distribution, expressed in the above-ground part of seedlings, especially in the vascular tissues. Also detected in the buds and silique pedicels. Highly induced in oil-accumulating tissues of maturing seeds.

The protein localises to the lipid droplet. It is found in the membrane. The catalysed reaction is an 11beta-hydroxysteroid + NADP(+) = an 11-oxosteroid + NADPH + H(+). The enzyme catalyses 17beta-estradiol + NADP(+) = estrone + NADPH + H(+). It carries out the reaction corticosterone + NADP(+) = 11-dehydrocorticosterone + NADPH + H(+). It catalyses the reaction cortisone + NADPH + H(+) = cortisol + NADP(+). Functionally, catalyzes 11-beta, 17-beta-hydroxysteroid and reduces 17-beta-ketosteroids. Involved in regulating plant growth and development, probably promoting or mediating brassinosteroid effects. Plays a role during seed maturation. The protein is 11-beta-hydroxysteroid dehydrogenase 1A (HSD1) of Arabidopsis thaliana (Mouse-ear cress).